Reading from the N-terminus, the 297-residue chain is Ubiquinone biosynthesis protein COQ4, mitochondrial (297 aa).

The transit peptide at 1-54 (MLSSARARLPISLCSFSLPFARLPNTLSRYQETWQRLPGRTHPTRSIRTTPAYE) directs the protein to the mitochondrion. Residues His-178, Asp-179, His-182, and Glu-194 each coordinate Zn(2+).

The protein belongs to the COQ4 family. In terms of assembly, component of a multi-subunit COQ enzyme complex, composed of at least COQ3, COQ4, COQ5, COQ6, COQ7 and COQ9. The cofactor is Zn(2+).

The protein resides in the mitochondrion inner membrane. The enzyme catalyses a 4-hydroxy-3-methoxy-5-(all-trans-polyprenyl)benzoate + H(+) = a 2-methoxy-6-(all-trans-polyprenyl)phenol + CO2. The protein operates within cofactor biosynthesis; ubiquinone biosynthesis. Its function is as follows. Lyase that catalyzes the C1-decarboxylation of 4-hydroxy-3-methoxy-5-(all-trans-polyprenyl)benzoic acid into 2-methoxy-6-(all-trans-polyprenyl)phenol during ubiquinone biosynthesis. In Laccaria bicolor (strain S238N-H82 / ATCC MYA-4686) (Bicoloured deceiver), this protein is Ubiquinone biosynthesis protein COQ4, mitochondrial.